Reading from the N-terminus, the 399-residue chain is Argininosuccinate synthase (399 aa).

An ATP-binding site is contributed by 8 to 16 (AYSGGLDTS). Tyrosine 87 contacts L-citrulline. Glycine 117 is an ATP binding site. The L-aspartate site is built by threonine 119, asparagine 123, and aspartate 124. An L-citrulline-binding site is contributed by asparagine 123. The L-citrulline site is built by arginine 127, serine 175, glutamate 259, and tyrosine 271.

This sequence belongs to the argininosuccinate synthase family. Type 1 subfamily. In terms of assembly, homotetramer.

It is found in the cytoplasm. It carries out the reaction L-citrulline + L-aspartate + ATP = 2-(N(omega)-L-arginino)succinate + AMP + diphosphate + H(+). It participates in amino-acid biosynthesis; L-arginine biosynthesis; L-arginine from L-ornithine and carbamoyl phosphate: step 2/3. The chain is Argininosuccinate synthase from Corynebacterium diphtheriae (strain ATCC 700971 / NCTC 13129 / Biotype gravis).